Here is a 435-residue protein sequence, read N- to C-terminus: Transcription activator ACTTR (435 aa).

The segment at residues 16–43 (CDFCTQSKLRCNKNKPSCRRCTIQQQPC) is a DNA-binding region (zn(2)-C6 fungal-type). Residues 48–89 (ARRTGRPPKRPRKANDGQEANEQHGDQDPVTSTPGGSCQQQS) form a disordered region. A compositionally biased stretch (basic residues) spans 50 to 59 (RTGRPPKRPR). Over residues 60-74 (KANDGQEANEQHGDQ) the composition is skewed to basic and acidic residues. The span at 76 to 89 (PVTSTPGGSCQQQS) shows a compositional bias: polar residues.

It localises to the nucleus. Functionally, transcription factor that regulates the expression of the gene clusters that mediate the biosynthesis of the host-selective toxins (HSTs) ACT-toxins responsible for brown spot of tangerine disease by the tangerine pathotype which affects tangerines and mandarins. ACT-toxins consist of three moieties, 9,10-epoxy-8-hydroxy-9-methyl-decatrienoic acid (EDA), valine and a polyketide. ACT-toxin I is toxic to both citrus and pear; toxin II the 5''-deoxy derivative of ACT-toxin I, is highly toxic to pear and slightly toxic to citrus. On cellular level, ACT-toxins affect plasma membrane of susceptible cells and cause a sudden increase in loss of K(+) after a few minutes of toxin treatment. The polypeptide is Transcription activator ACTTR (Alternaria alternata (Alternaria rot fungus)).